The primary structure comprises 418 residues: Actin-related protein 3 (418 aa).

It belongs to the actin family. ARP3 subfamily. As to quaternary structure, component of the Arp2/3 complex.

The protein resides in the cytoplasm. Its subcellular location is the cytoskeleton. Functionally, functions as ATP-binding component of the Arp2/3 complex which is involved in regulation of actin polymerization and together with an activating nucleation-promoting factor (NPF) mediates the formation of branched actin networks. Seems to contact the pointed end of the daughter actin filament. Required during embryogenesis for the developmental migration of tail hemocytes anteriorly, along the ventral midline. In Drosophila melanogaster (Fruit fly), this protein is Actin-related protein 3.